The chain runs to 770 residues: ATP-dependent RNA helicase HCA4 (770 aa).

The Q motif signature appears at 41 to 69 (KFFKDLPISDPTLKGLRESSFIKLTEIQA). The Helicase ATP-binding domain occupies 72 to 246 (IPVSLQGHDV…RLSLTDYKTV (175 aa)). 85–92 (AKTGSGKT) contacts ATP. The DEAD box motif lies at 194–197 (DEAD). Residues 278–437 (KLDILFSFIK…SIKPQLQSLL (160 aa)) form the Helicase C-terminal domain. A phosphoserine mark is found at S692, S710, S714, and S743. Positions 705-724 (GTGNLSDDMSDGDMPDSEGH) are disordered.

The protein belongs to the DEAD box helicase family. DDX10/DBP4 subfamily. Interacts with the U3 and U14 snoRNAs. Associates with pre-ribosomal complexes.

It localises to the nucleus. The protein localises to the nucleolus. It catalyses the reaction ATP + H2O = ADP + phosphate + H(+). Functionally, ATP-dependent RNA helicase required for ribosome biogenesis. Involved in the release of U14 snoRNA in pre-ribosomal complexes. Required for pre-rRNA cleavage at site A2. The polypeptide is ATP-dependent RNA helicase HCA4 (HCA4) (Saccharomyces cerevisiae (strain ATCC 204508 / S288c) (Baker's yeast)).